The primary structure comprises 560 residues: Dihydroxy-acid dehydratase (560 aa).

Residues 1 to 20 (MGDNLKKRSSMTTDGDNRAP) form a disordered region. Cys52 lines the [2Fe-2S] cluster pocket. Residue Asp84 participates in Mg(2+) binding. Position 125 (Cys125) interacts with [2Fe-2S] cluster. The Mg(2+) site is built by Asp126 and Lys127. Residue Lys127 is modified to N6-carboxylysine. Position 197 (Cys197) interacts with [2Fe-2S] cluster. Glu448 provides a ligand contact to Mg(2+). The Proton acceptor role is filled by Ser474.

This sequence belongs to the IlvD/Edd family. As to quaternary structure, homodimer. It depends on [2Fe-2S] cluster as a cofactor. Mg(2+) serves as cofactor.

The enzyme catalyses (2R)-2,3-dihydroxy-3-methylbutanoate = 3-methyl-2-oxobutanoate + H2O. It carries out the reaction (2R,3R)-2,3-dihydroxy-3-methylpentanoate = (S)-3-methyl-2-oxopentanoate + H2O. It functions in the pathway amino-acid biosynthesis; L-isoleucine biosynthesis; L-isoleucine from 2-oxobutanoate: step 3/4. The protein operates within amino-acid biosynthesis; L-valine biosynthesis; L-valine from pyruvate: step 3/4. Functions in the biosynthesis of branched-chain amino acids. Catalyzes the dehydration of (2R,3R)-2,3-dihydroxy-3-methylpentanoate (2,3-dihydroxy-3-methylvalerate) into 2-oxo-3-methylpentanoate (2-oxo-3-methylvalerate) and of (2R)-2,3-dihydroxy-3-methylbutanoate (2,3-dihydroxyisovalerate) into 2-oxo-3-methylbutanoate (2-oxoisovalerate), the penultimate precursor to L-isoleucine and L-valine, respectively. The protein is Dihydroxy-acid dehydratase of Leptospira interrogans serogroup Icterohaemorrhagiae serovar Lai (strain 56601).